Reading from the N-terminus, the 88-residue chain is Small ribosomal subunit protein uS17 (88 aa).

It belongs to the universal ribosomal protein uS17 family. In terms of assembly, part of the 30S ribosomal subunit.

In terms of biological role, one of the primary rRNA binding proteins, it binds specifically to the 5'-end of 16S ribosomal RNA. The sequence is that of Small ribosomal subunit protein uS17 from Levilactobacillus brevis (strain ATCC 367 / BCRC 12310 / CIP 105137 / JCM 1170 / LMG 11437 / NCIMB 947 / NCTC 947) (Lactobacillus brevis).